Here is a 359-residue protein sequence, read N- to C-terminus: Aminomethyltransferase (359 aa).

The protein belongs to the GcvT family. As to quaternary structure, the glycine cleavage system is composed of four proteins: P, T, L and H.

It catalyses the reaction N(6)-[(R)-S(8)-aminomethyldihydrolipoyl]-L-lysyl-[protein] + (6S)-5,6,7,8-tetrahydrofolate = N(6)-[(R)-dihydrolipoyl]-L-lysyl-[protein] + (6R)-5,10-methylene-5,6,7,8-tetrahydrofolate + NH4(+). Functionally, the glycine cleavage system catalyzes the degradation of glycine. This chain is Aminomethyltransferase, found in Idiomarina loihiensis (strain ATCC BAA-735 / DSM 15497 / L2-TR).